The primary structure comprises 189 residues: Thioredoxin-like protein CITRX, chloroplastic (189 aa).

The transit peptide at 1-36 (MAMAAAASLLPACAAPTLPGRAFRPRRNSTPTASLS) directs the protein to the chloroplast. Residues 72 to 189 (GSGKYIAPDY…MIRNIIDNEL (118 aa)) form the Thioredoxin domain. Active-site nucleophile residues include C112 and C115. A disulfide bond links C112 and C115.

It belongs to the thioredoxin family. Plant CITRX-type subfamily.

It localises to the plastid. Its subcellular location is the chloroplast. Functionally, probable thiol-disulfide oxidoreductase that may play a role in proper chloroplast development. The polypeptide is Thioredoxin-like protein CITRX, chloroplastic (Oryza sativa subsp. indica (Rice)).